The chain runs to 454 residues: Light-independent protochlorophyllide reductase subunit N (454 aa).

Residues cysteine 22, cysteine 47, and cysteine 107 each coordinate [4Fe-4S] cluster.

It belongs to the BchN/ChlN family. As to quaternary structure, protochlorophyllide reductase is composed of three subunits; ChlL, ChlN and ChlB. Forms a heterotetramer of two ChlB and two ChlN subunits. Requires [4Fe-4S] cluster as cofactor.

The protein localises to the plastid. The protein resides in the chloroplast. The catalysed reaction is chlorophyllide a + oxidized 2[4Fe-4S]-[ferredoxin] + 2 ADP + 2 phosphate = protochlorophyllide a + reduced 2[4Fe-4S]-[ferredoxin] + 2 ATP + 2 H2O. The protein operates within porphyrin-containing compound metabolism; chlorophyll biosynthesis (light-independent). Functionally, component of the dark-operative protochlorophyllide reductase (DPOR) that uses Mg-ATP and reduced ferredoxin to reduce ring D of protochlorophyllide (Pchlide) to form chlorophyllide a (Chlide). This reaction is light-independent. The NB-protein (ChlN-ChlB) is the catalytic component of the complex. The polypeptide is Light-independent protochlorophyllide reductase subunit N (Cycas taitungensis (Prince sago)).